The chain runs to 100 residues: NADH-quinone oxidoreductase subunit K (100 aa).

Transmembrane regions (helical) follow at residues 4–24 (YEYYVALSGLLMVLGFIGVIV), 28–48 (IIAMLISTELMLNAVNVAFVA), and 60–80 (VFVFFILTIAAAEAAIGLGLI).

It belongs to the complex I subunit 4L family. As to quaternary structure, NDH-1 is composed of 14 different subunits. Subunits NuoA, H, J, K, L, M, N constitute the membrane sector of the complex.

The protein resides in the cell inner membrane. It carries out the reaction a quinone + NADH + 5 H(+)(in) = a quinol + NAD(+) + 4 H(+)(out). In terms of biological role, NDH-1 shuttles electrons from NADH, via FMN and iron-sulfur (Fe-S) centers, to quinones in the respiratory chain. The immediate electron acceptor for the enzyme in this species is believed to be ubiquinone. Couples the redox reaction to proton translocation (for every two electrons transferred, four hydrogen ions are translocated across the cytoplasmic membrane), and thus conserves the redox energy in a proton gradient. The polypeptide is NADH-quinone oxidoreductase subunit K (Sulfurihydrogenibium azorense (strain DSM 15241 / OCM 825 / Az-Fu1)).